We begin with the raw amino-acid sequence, 692 residues long: DNA ligase (692 aa).

NAD(+) is bound by residues 35–39 (DLVYD), 88–89 (SL), and E117. K119 (N6-AMP-lysine intermediate) is an active-site residue. Positions 140, 176, 301, and 325 each coordinate NAD(+). Zn(2+)-binding residues include C416, C419, C434, and C439. One can recognise a BRCT domain in the interval 611–692 (LTNQSNSWAS…FDLIKNSKKT (82 aa)).

Belongs to the NAD-dependent DNA ligase family. LigA subfamily. Mg(2+) serves as cofactor. Mn(2+) is required as a cofactor.

It carries out the reaction NAD(+) + (deoxyribonucleotide)n-3'-hydroxyl + 5'-phospho-(deoxyribonucleotide)m = (deoxyribonucleotide)n+m + AMP + beta-nicotinamide D-nucleotide.. Functionally, DNA ligase that catalyzes the formation of phosphodiester linkages between 5'-phosphoryl and 3'-hydroxyl groups in double-stranded DNA using NAD as a coenzyme and as the energy source for the reaction. It is essential for DNA replication and repair of damaged DNA. In Mesomycoplasma hyopneumoniae (strain J / ATCC 25934 / NCTC 10110) (Mycoplasma hyopneumoniae), this protein is DNA ligase.